We begin with the raw amino-acid sequence, 530 residues long: Protein P80 (530 aa).

Positions 1–22 (MKVISGLLFFILISCSLFLVQG) are cleaved as a signal peptide. A helical transmembrane segment spans residues 491–511 (MLVAMTFNVALFFAVIAGVLV).

It belongs to the SLC31A transporter family.

The protein resides in the late endosome membrane. The polypeptide is Protein P80 (p80) (Dictyostelium discoideum (Social amoeba)).